We begin with the raw amino-acid sequence, 68 residues long: MDQVMQFVEPSRQFVKDSIRLVKRCTKPDRKEFQKIAMATAIGFAIMGFIGFFVKLIHIPINNIIVGS.

Residues 1-32 (MDQVMQFVEPSRQFVKDSIRLVKRCTKPDRKE) are Cytoplasmic-facing. A helical membrane pass occupies residues 33–61 (FQKIAMATAIGFAIMGFIGFFVKLIHIPI). The Extracellular portion of the chain corresponds to 62-68 (NNIIVGS).

The protein belongs to the SecE/SEC61-gamma family. In terms of assembly, the SEC61 channel-forming translocon complex consists of channel-forming core components SEC61A1, SEC61B and SEC61G and different auxiliary components such as SEC62 and SEC63. The SEC61 channel associates with the multi-pass translocon (MPT) complex.

The protein resides in the endoplasmic reticulum membrane. Its function is as follows. Component of SEC61 channel-forming translocon complex that mediates transport of signal peptide-containing precursor polypeptides across the endoplasmic reticulum (ER). Forms a ribosome receptor and a gated pore in the ER membrane, both functions required for cotranslational translocation of nascent polypeptides. The SEC61 channel is also involved in ER membrane insertion of transmembrane proteins: it mediates membrane insertion of the first few transmembrane segments of proteins, while insertion of subsequent transmembrane regions of multi-pass membrane proteins is mediated by the multi-pass translocon (MPT) complex. The sequence is that of Protein transport protein Sec61 subunit gamma (sec61g) from Xenopus laevis (African clawed frog).